The sequence spans 154 residues: Regulatory protein RecX (154 aa).

Belongs to the RecX family.

Its subcellular location is the cytoplasm. Its function is as follows. Modulates RecA activity. The polypeptide is Regulatory protein RecX (Trichlorobacter lovleyi (strain ATCC BAA-1151 / DSM 17278 / SZ) (Geobacter lovleyi)).